The sequence spans 156 residues: Rhombotin-1 (156 aa).

LIM zinc-binding domains follow at residues 22 to 84 (KGCA…LFGT) and 86 to 148 (GNCA…GHLN).

As to expression, expressed in the brain and not in the thymus.

It is found in the nucleus. Its function is as follows. May be involved in gene regulation within neural lineage cells potentially by direct DNA binding or by binding to other transcription factors. The protein is Rhombotin-1 (Lmo1) of Mus musculus (Mouse).